A 287-amino-acid polypeptide reads, in one-letter code: MGIRSFRPYTPGTRTRVVSDFSEVTRRKPERSLVVAKHRRKGRNNRGVITCRHRGGGHKRLYRIVDFRRDKHGVVARVAAIQYDPHRNARLALLYYTDGEKRYILHPAGVQVGQEVVAGPEAPIEVGNALPLSAIPLGSAVHNVELYAGRGGQMVRTAGASAQVMAKEGDYVALKLPSTEVRLVRRECYATLGEVGNSEVRNTSLGKAGRKRWLGRRPEVRGSVMNPCDHPHGGGEGRAPIGRSGPVTPWGKPALGLKTRKRNKPSNKFVLRKRRKTSKRSRGGRDS.

Residues 221 to 287 form a disordered region; sequence RGSVMNPCDH…SKRSRGGRDS (67 aa). The span at 258–287 shows a compositional bias: basic residues; it reads KTRKRNKPSNKFVLRKRRKTSKRSRGGRDS.

The protein belongs to the universal ribosomal protein uL2 family. Part of the 50S ribosomal subunit. Forms a bridge to the 30S subunit in the 70S ribosome.

One of the primary rRNA binding proteins. Required for association of the 30S and 50S subunits to form the 70S ribosome, for tRNA binding and peptide bond formation. It has been suggested to have peptidyltransferase activity; this is somewhat controversial. Makes several contacts with the 16S rRNA in the 70S ribosome. The chain is Large ribosomal subunit protein uL2 from Synechococcus sp. (strain RCC307).